The sequence spans 108 residues: Translation initiation factor 1A (108 aa).

An S1-like domain is found at 11–85 (SVKEVPKPAE…NKCDIIYKYS (75 aa)).

The protein belongs to the eIF-1A family.

Its function is as follows. Seems to be required for maximal rate of protein biosynthesis. Enhances ribosome dissociation into subunits and stabilizes the binding of the initiator Met-tRNA(I) to 40 S ribosomal subunits. This Sulfurisphaera tokodaii (strain DSM 16993 / JCM 10545 / NBRC 100140 / 7) (Sulfolobus tokodaii) protein is Translation initiation factor 1A (eIF1A).